We begin with the raw amino-acid sequence, 424 residues long: Serine--tRNA ligase (424 aa).

The segment at Gln-109–Asp-129 is disordered. Residue Thr-231–Glu-233 participates in L-serine binding. Arg-262–Glu-264 contributes to the ATP binding site. Glu-285 is a binding site for L-serine. Glu-349–Ser-352 serves as a coordination point for ATP. Ser-385 is an L-serine binding site.

This sequence belongs to the class-II aminoacyl-tRNA synthetase family. Type-1 seryl-tRNA synthetase subfamily. Homodimer. The tRNA molecule binds across the dimer.

Its subcellular location is the cytoplasm. The enzyme catalyses tRNA(Ser) + L-serine + ATP = L-seryl-tRNA(Ser) + AMP + diphosphate + H(+). It carries out the reaction tRNA(Sec) + L-serine + ATP = L-seryl-tRNA(Sec) + AMP + diphosphate + H(+). It functions in the pathway aminoacyl-tRNA biosynthesis; selenocysteinyl-tRNA(Sec) biosynthesis; L-seryl-tRNA(Sec) from L-serine and tRNA(Sec): step 1/1. Functionally, catalyzes the attachment of serine to tRNA(Ser). Is also able to aminoacylate tRNA(Sec) with serine, to form the misacylated tRNA L-seryl-tRNA(Sec), which will be further converted into selenocysteinyl-tRNA(Sec). The protein is Serine--tRNA ligase of Shouchella clausii (strain KSM-K16) (Alkalihalobacillus clausii).